The chain runs to 162 residues: Beta-carotene hydroxylase (162 aa).

Residues 8–135 enclose the Fatty acid hydroxylase domain; the sequence is VATVLVMELT…GRDHCVSFGF (128 aa).

The protein belongs to the sterol desaturase family.

The catalysed reaction is all-trans-beta-carotene + 4 reduced [2Fe-2S]-[ferredoxin] + 2 O2 + 4 H(+) = all-trans-zeaxanthin + 4 oxidized [2Fe-2S]-[ferredoxin] + 2 H2O. The protein operates within carotenoid biosynthesis; astaxanthin biosynthesis. Catalyzes the hydroxylation reaction from beta-carotene to zeaxanthin via beta-cryptoxanthin. This Paracoccus sp. (strain N81106 / MBIC 01143) (Agrobacterium aurantiacum) protein is Beta-carotene hydroxylase (crtZ).